The following is a 357-amino-acid chain: tRNA N6-adenosine threonylcarbamoyltransferase (357 aa).

Positions 120 and 124 each coordinate Fe cation. Substrate is bound by residues 143–147, D176, G189, and N289; that span reads LVSGG. D317 serves as a coordination point for Fe cation.

This sequence belongs to the KAE1 / TsaD family. Fe(2+) serves as cofactor.

It is found in the cytoplasm. The catalysed reaction is L-threonylcarbamoyladenylate + adenosine(37) in tRNA = N(6)-L-threonylcarbamoyladenosine(37) in tRNA + AMP + H(+). Required for the formation of a threonylcarbamoyl group on adenosine at position 37 (t(6)A37) in tRNAs that read codons beginning with adenine. Is involved in the transfer of the threonylcarbamoyl moiety of threonylcarbamoyl-AMP (TC-AMP) to the N6 group of A37, together with TsaE and TsaB. TsaD likely plays a direct catalytic role in this reaction. The protein is tRNA N6-adenosine threonylcarbamoyltransferase of Polynucleobacter asymbioticus (strain DSM 18221 / CIP 109841 / QLW-P1DMWA-1) (Polynucleobacter necessarius subsp. asymbioticus).